Here is a 190-residue protein sequence, read N- to C-terminus: Myosin, light chain 1, alkali; skeletal, fast (190 aa).

A compositionally biased stretch (basic and acidic residues) spans M1–E17. The disordered stretch occupies residues M1–A33. The span at A19 to P28 shows a compositional bias: pro residues. 2 consecutive EF-hand domains span residues D46 to N81 and A123 to K158.

As to quaternary structure, myosin is a hexamer of 2 heavy chains and 4 light chains. Does not bind calcium. As to expression, expressed in fast muscle fibers during skeletal muscle differentiation.

Non-regulatory myosin light chain required for proper formation and/or maintenance of myofibers, and thus appropriate muscle function. This chain is Myosin, light chain 1, alkali; skeletal, fast, found in Danio rerio (Zebrafish).